We begin with the raw amino-acid sequence, 148 residues long: Protein NrdI (148 aa).

This sequence belongs to the NrdI family.

Functionally, probably involved in ribonucleotide reductase function. The protein is Protein NrdI of Corynebacterium glutamicum (strain R).